The sequence spans 312 residues: Regulation of nuclear pre-mRNA domain-containing protein 1A (312 aa).

Ser-2 is subject to N-acetylserine. Positions Ser-2–Lys-133 constitute a CID domain. A phosphoserine mark is found at Ser-153, Ser-156, and Ser-285. A coiled-coil region spans residues Leu-244–Leu-286.

It belongs to the UPF0400 (RTT103) family. As to quaternary structure, may form a heterodimer with RPRD1B. Associates with the RNA polymerase II subunit POLR2A (via CTD phosphorylated at 'Ser-2' and 'Ser-7' of the heptad repeats).

The protein localises to the nucleus. In terms of biological role, interacts with phosphorylated C-terminal heptapeptide repeat domain (CTD) of the largest RNA polymerase II subunit POLR2A, and participates in dephosphorylation of the CTD by RPAP2. May act as a negative regulator of cyclin-D1 (CCND1) and cyclin-E (CCNE1) in the cell cycle. The polypeptide is Regulation of nuclear pre-mRNA domain-containing protein 1A (Rprd1a) (Mus musculus (Mouse)).